The following is a 765-amino-acid chain: ATP-dependent zinc metalloprotease FtsH (765 aa).

The Cytoplasmic portion of the chain corresponds to 1 to 27; the sequence is MSNTSNFNERVTENAKPPKNVKSIIWK. The helical transmembrane segment at 28 to 48 threads the bilayer; that stretch reads TIGIIIVMAIIIGLILFYVLP. The Extracellular segment spans residues 49–213; the sequence is RNTIANISNI…NVQLPNQSTA (165 aa). The helical transmembrane segment at 214–234 threads the bilayer; sequence ILTQFLTSIIPFVILIVIYIV. Over 235–765 the chain is Cytoplasmic; sequence IARRFSRTMG…EPTASTASSN (531 aa). 314–321 provides a ligand contact to ATP; the sequence is GPPGTGKT. His536 contributes to the Zn(2+) binding site. The active site involves Glu537. 2 residues coordinate Zn(2+): His540 and Asp615. Basic and acidic residues predominate over residues 730-748; sequence KAAAEKEEQAEKAKLDHQS. The tract at residues 730–765 is disordered; the sequence is KAAAEKEEQAEKAKLDHQSDSAQPQEEPTASTASSN. The span at 749 to 765 shows a compositional bias: polar residues; it reads DSAQPQEEPTASTASSN.

This sequence in the central section; belongs to the AAA ATPase family. The protein in the C-terminal section; belongs to the peptidase M41 family. Homohexamer. Zn(2+) is required as a cofactor.

Its subcellular location is the cell membrane. Its function is as follows. Acts as a processive, ATP-dependent zinc metallopeptidase for both cytoplasmic and membrane proteins. Plays a role in the quality control of integral membrane proteins. The sequence is that of ATP-dependent zinc metalloprotease FtsH from Mycoplasmoides gallisepticum (strain R(high / passage 156)) (Mycoplasma gallisepticum).